A 230-amino-acid polypeptide reads, in one-letter code: MNMKEPISIILLESALELVPKELWKHPAVVKNARRRGKKPGETLLDVSLHYHAMKKLKDKEKRGRPDIVHISLLNALESPLNKEGYLRIYIHTYPGHIIFVKPETRIPRNYNRFVGLMEQLLIHGKVPPDSDDPLLYVKTMTISDLLEKINKNGIILLREHGEKEKPENIVKYAVENNYAIGIGGFPHGDYSQEIISISKAEFSIYNKPLTTWITISRVIVGAEHLYNII.

S-adenosyl-L-methionine is bound by residues Gly184, Gly189, and 205 to 210 (IYNKPL).

It belongs to the class IV-like SAM-binding methyltransferase superfamily. RNA methyltransferase NEP1 family. As to quaternary structure, homodimer.

It carries out the reaction a pseudouridine in rRNA + S-adenosyl-L-methionine = an N(1)-methylpseudouridine in rRNA + S-adenosyl-L-homocysteine + H(+). In terms of biological role, methyltransferase involved in ribosomal biogenesis. Specifically catalyzes the N1-methylation of the pseudouridine corresponding to position 914 in M.jannaschii 16S rRNA. The polypeptide is Ribosomal RNA small subunit methyltransferase Nep1 (Staphylothermus marinus (strain ATCC 43588 / DSM 3639 / JCM 9404 / F1)).